Consider the following 482-residue polypeptide: Bifunctional protein GlmU (482 aa).

The segment at 1-238 (MSAIRPAAVV…HREIAGINNR (238 aa)) is pyrophosphorylase. Residues 12 to 15 (LAAG), K26, Q79, and 84 to 85 (GT) contribute to the UDP-N-acetyl-alpha-D-glucosamine site. D110 contributes to the Mg(2+) binding site. UDP-N-acetyl-alpha-D-glucosamine is bound by residues G147, E163, N178, and N236. N236 is a Mg(2+) binding site. The interval 239-259 (VQLAEARRILNDRLLTRAMLA) is linker. The tract at residues 260-482 (GVTVVDPATT…VASRKPEGED (223 aa)) is N-acetyltransferase. UDP-N-acetyl-alpha-D-glucosamine is bound by residues R341 and K359. The active-site Proton acceptor is H371. UDP-N-acetyl-alpha-D-glucosamine is bound by residues Y374 and N385. Residues A388, 394 to 395 (NY), S413, A431, and R448 each bind acetyl-CoA.

In the N-terminal section; belongs to the N-acetylglucosamine-1-phosphate uridyltransferase family. The protein in the C-terminal section; belongs to the transferase hexapeptide repeat family. In terms of assembly, homotrimer. Requires Mg(2+) as cofactor.

It is found in the cytoplasm. It carries out the reaction alpha-D-glucosamine 1-phosphate + acetyl-CoA = N-acetyl-alpha-D-glucosamine 1-phosphate + CoA + H(+). The catalysed reaction is N-acetyl-alpha-D-glucosamine 1-phosphate + UTP + H(+) = UDP-N-acetyl-alpha-D-glucosamine + diphosphate. It participates in nucleotide-sugar biosynthesis; UDP-N-acetyl-alpha-D-glucosamine biosynthesis; N-acetyl-alpha-D-glucosamine 1-phosphate from alpha-D-glucosamine 6-phosphate (route II): step 2/2. The protein operates within nucleotide-sugar biosynthesis; UDP-N-acetyl-alpha-D-glucosamine biosynthesis; UDP-N-acetyl-alpha-D-glucosamine from N-acetyl-alpha-D-glucosamine 1-phosphate: step 1/1. It functions in the pathway bacterial outer membrane biogenesis; LPS lipid A biosynthesis. Catalyzes the last two sequential reactions in the de novo biosynthetic pathway for UDP-N-acetylglucosamine (UDP-GlcNAc). The C-terminal domain catalyzes the transfer of acetyl group from acetyl coenzyme A to glucosamine-1-phosphate (GlcN-1-P) to produce N-acetylglucosamine-1-phosphate (GlcNAc-1-P), which is converted into UDP-GlcNAc by the transfer of uridine 5-monophosphate (from uridine 5-triphosphate), a reaction catalyzed by the N-terminal domain. The protein is Bifunctional protein GlmU of Streptomyces avermitilis (strain ATCC 31267 / DSM 46492 / JCM 5070 / NBRC 14893 / NCIMB 12804 / NRRL 8165 / MA-4680).